A 138-amino-acid polypeptide reads, in one-letter code: Small ribosomal subunit protein uS11c (138 aa).

The protein belongs to the universal ribosomal protein uS11 family. As to quaternary structure, part of the 30S ribosomal subunit.

Its subcellular location is the plastid. The sequence is that of Small ribosomal subunit protein uS11c from Cuscuta gronovii (Common dodder).